The chain runs to 193 residues: Peptidyl-tRNA hydrolase 1 (193 aa).

Tyr27 contributes to the tRNA binding site. His32 functions as the Proton acceptor in the catalytic mechanism. The tRNA site is built by Phe80, Asn82, and Asn128.

Belongs to the PTH family. In terms of assembly, monomer.

Its subcellular location is the cytoplasm. It catalyses the reaction an N-acyl-L-alpha-aminoacyl-tRNA + H2O = an N-acyl-L-amino acid + a tRNA + H(+). Hydrolyzes ribosome-free peptidyl-tRNAs (with 1 or more amino acids incorporated), which drop off the ribosome during protein synthesis, or as a result of ribosome stalling. Functionally, catalyzes the release of premature peptidyl moieties from peptidyl-tRNA molecules trapped in stalled 50S ribosomal subunits, and thus maintains levels of free tRNAs and 50S ribosomes. In Corynebacterium jeikeium (strain K411), this protein is Peptidyl-tRNA hydrolase 1.